The following is a 289-amino-acid chain: dTDP-rhamnosyl transferase RfbG (289 aa).

The protein belongs to the glycosyltransferase 2 family.

It functions in the pathway bacterial outer membrane biogenesis; lipopolysaccharide biosynthesis. The sequence is that of dTDP-rhamnosyl transferase RfbG (rfbG) from Shigella flexneri.